We begin with the raw amino-acid sequence, 201 residues long: Putative manganese efflux pump MntP (201 aa).

5 helical membrane-spanning segments follow: residues 6–26, 39–59, 105–125, 127–147, and 169–189; these read CLAVAVALAMDAFAVAIATGI, LAFHFGLFQALMPVAGWTLGL, LTLIMLAVATSIDALAVGLSL, VLGIDIVTPAIVIGVVCLLFT, and LAGGVVLIGIGLRILYEHGVF.

This sequence belongs to the MntP (TC 9.B.29) family.

It localises to the cell inner membrane. Probably functions as a manganese efflux pump. In Nitratidesulfovibrio vulgaris (strain ATCC 29579 / DSM 644 / CCUG 34227 / NCIMB 8303 / VKM B-1760 / Hildenborough) (Desulfovibrio vulgaris), this protein is Putative manganese efflux pump MntP.